Here is a 572-residue protein sequence, read N- to C-terminus: Na(+)/citrate cotransporter (572 aa).

A run of 8 helical transmembrane segments spans residues 13 to 33 (SFAILLFTPILMLPLVILIPD), 53 to 73 (VIPVAVTSLLPVLLFPLLKVL), 80 to 100 (IQYMKDTNMLFLGSLIVAVAV), 124 to 144 (LMLGFMFVTAFLSMWISNTAA), 218 to 238 (SASIGGTATLTGTGPNVVLLG), 255 to 275 (SWFGFAFPNMVMMLVLAWLWL), 315 to 335 (SLSYPECNVLFCFTLLVILWF), and 357 to 377 (HITDATVAIFVAILLFIIPSQ). Asn-382 carries an N-linked (GlcNAc...) asparagine glycan. Helical transmembrane passes span 410 to 430 (VPWDIVLLLGGGFAMAKGCET), 443 to 463 (PLRLVKPAVITLILSCLVAMT), 491 to 511 (PLYVMIPCTMSASLAFMLPVA), and 532 to 552 (TGLIMNFVGILSVFLSVNTWG). Asn-566 carries an N-linked (GlcNAc...) asparagine glycan.

Belongs to the SLC13A/DASS transporter (TC 2.A.47) family. NADC subfamily. In terms of assembly, homodimer.

The protein localises to the cell membrane. The catalysed reaction is citrate(out) + 4 Na(+)(out) = citrate(in) + 4 Na(+)(in). With respect to regulation, inhibited by Li(+). Functionally, high-affinity sodium/citrate cotransporter that mediates citrate entry into cells, which is a critical participant of biochemical pathways. May function in various metabolic processes in which citrate has a critical role such as energy production (Krebs cycle), fatty acid synthesis, cholesterol synthesis, glycolysis, and gluconeogenesis. Transports citrate into the cell in a Na(+)-dependent manner, recognizing the trivalent form of citrate (physiological pH) rather than the divalent form. Can recognizes succinate as a substrate, but its affinity for succinate is several fold lower than for citrate. The stoichiometry is probably 4 Na(+) for each carboxylate, irrespective of whether the translocated substrate is divalent or trivalent, rendering the process electrogenic. Involved in the regulation of citrate levels in the brain. The protein is Na(+)/citrate cotransporter (Slc13a5) of Mus musculus (Mouse).